The sequence spans 566 residues: NXPE family member 3 (566 aa).

A signal peptide spans 1-32; it reads MEKYFPKYVPFFSLLALSGLLYLLWSITSLES. N64, N172, N242, N303, and N344 each carry an N-linked (GlcNAc...) asparagine glycan.

It belongs to the NXPE family.

It localises to the secreted. This chain is NXPE family member 3 (nxpe3), found in Danio rerio (Zebrafish).